Reading from the N-terminus, the 539-residue chain is Probable protein kinase UbiB (539 aa).

A helical membrane pass occupies residues 23 to 43 (DLLFALPLPWWMLALRFVLPW). The Protein kinase domain occupies 125–492 (RFDEKPLASA…WHDRKDEPVL (368 aa)). ATP contacts are provided by residues 131–139 (LASASVAQV) and Lys-153. The active-site Proton acceptor is the Asp-288. A run of 2 helical transmembrane segments spans residues 494-514 (LIGA…SEAA) and 517-537 (LLTL…YLIV).

The protein belongs to the ABC1 family. UbiB subfamily.

Its subcellular location is the cell inner membrane. Its pathway is cofactor biosynthesis; ubiquinone biosynthesis [regulation]. Functionally, is probably a protein kinase regulator of UbiI activity which is involved in aerobic coenzyme Q (ubiquinone) biosynthesis. This chain is Probable protein kinase UbiB, found in Pseudomonas syringae pv. syringae (strain B728a).